We begin with the raw amino-acid sequence, 49 residues long: uncharacterized protein (49 aa).

This is an uncharacterized protein from Saccharomyces cerevisiae (strain ATCC 204508 / S288c) (Baker's yeast).